The primary structure comprises 536 residues: Chaperonin GroEL 2 (536 aa).

ATP is bound by residues 29–32 (TLGP), 86–90 (DGTTT), Gly-413, 476–478 (NAA), and Asp-492.

It belongs to the chaperonin (HSP60) family. In terms of assembly, forms a cylinder of 14 subunits composed of two heptameric rings stacked back-to-back. Interacts with the co-chaperonin GroES.

Its subcellular location is the cytoplasm. The enzyme catalyses ATP + H2O + a folded polypeptide = ADP + phosphate + an unfolded polypeptide.. In terms of biological role, together with its co-chaperonin GroES, plays an essential role in assisting protein folding. The GroEL-GroES system forms a nano-cage that allows encapsulation of the non-native substrate proteins and provides a physical environment optimized to promote and accelerate protein folding. In Moorella thermoacetica (strain ATCC 39073 / JCM 9320), this protein is Chaperonin GroEL 2.